A 243-amino-acid chain; its full sequence is NADH-ubiquinone oxidoreductase chain 6 (243 aa).

5 consecutive transmembrane segments (helical) span residues isoleucine 16–valine 36, isoleucine 41–leucine 61, alanine 69–isoleucine 89, isoleucine 104–tyrosine 124, and isoleucine 201–isoleucine 221.

This sequence belongs to the complex I subunit 6 family.

It localises to the mitochondrion membrane. It catalyses the reaction a ubiquinone + NADH + 5 H(+)(in) = a ubiquinol + NAD(+) + 4 H(+)(out). In terms of biological role, core subunit of the mitochondrial membrane respiratory chain NADH dehydrogenase (Complex I) that is believed to belong to the minimal assembly required for catalysis. Complex I functions in the transfer of electrons from NADH to the respiratory chain. The immediate electron acceptor for the enzyme is believed to be ubiquinone. The protein is NADH-ubiquinone oxidoreductase chain 6 (ndh-6) of Neurospora crassa (strain ATCC 24698 / 74-OR23-1A / CBS 708.71 / DSM 1257 / FGSC 987).